The sequence spans 171 residues: Mitochondrial import inner membrane translocase subunit Tim17-A (171 aa).

C9 and C78 are oxidised to a cystine. 3 helical membrane-spanning segments follow: residues 17 to 37, 63 to 77, and 113 to 133; these read CGGA…IKGF, GGSF…SMID, and VGSA…GILL. The interval 144 to 171 is disordered; sequence GPQFAEDPSQLPSTQLPSSPFGDYRQYQ. Over residues 151 to 163 the composition is skewed to low complexity; the sequence is PSQLPSTQLPSSP.

It belongs to the Tim17/Tim22/Tim23 family. In terms of assembly, component of the TIM23 complex at least composed of TIMM23, TIMM17 (TIMM17A or TIMM17B) and TIMM50. The complex interacts with the TIMM44 component of the PAM complex and with DNAJC15. Degraded by YMEL1 downstream of the integrated stress response (ISR).

Its subcellular location is the mitochondrion inner membrane. Its function is as follows. Essential component of the TIM23 complex, a complex that mediates the translocation of transit peptide-containing proteins across the mitochondrial inner membrane. This is Mitochondrial import inner membrane translocase subunit Tim17-A (TIMM17A) from Homo sapiens (Human).